A 231-amino-acid polypeptide reads, in one-letter code: MSTSETATVIPVYDVAPGQQGAPAVDRAPAPSAPPAAAAAPAAAAAKSTAPRRFAAGRFFRQSDRGSRCLAFLDFLLRIAAFGPALAAAIATGTSDETLSVFTEFFQFRARFDDFPAFLFLMVANAIAAGYLVLSLPFSAVVVLRPQATGLRLLLLVCDTIMIGLLTAAAAAAAAIVELAHNGNERANWVAICMQFHGFCQRTSGAVVASFLSVFLFLLLVVLAAFAIRKR.

Topologically, residues 1 to 69 are cytoplasmic; sequence MSTSETATVI…FRQSDRGSRC (69 aa). A helical transmembrane segment spans residues 70–90; it reads LAFLDFLLRIAAFGPALAAAI. Topologically, residues 91–117 are extracellular; the sequence is ATGTSDETLSVFTEFFQFRARFDDFPA. The helical transmembrane segment at 118–138 threads the bilayer; that stretch reads FLFLMVANAIAAGYLVLSLPF. Topologically, residues 139–152 are cytoplasmic; it reads SAVVVLRPQATGLR. The chain crosses the membrane as a helical span at residues 153-173; it reads LLLLVCDTIMIGLLTAAAAAA. The Extracellular portion of the chain corresponds to 174-207; sequence AAIVELAHNGNERANWVAICMQFHGFCQRTSGAV. The chain crosses the membrane as a helical span at residues 208 to 228; it reads VASFLSVFLFLLLVVLAAFAI. Residues 229 to 231 are Cytoplasmic-facing; the sequence is RKR.

This sequence belongs to the Casparian strip membrane proteins (CASP) family. In terms of assembly, homodimer and heterodimers.

Its subcellular location is the cell membrane. In terms of biological role, regulates membrane-cell wall junctions and localized cell wall deposition. Required for establishment of the Casparian strip membrane domain (CSD) and the subsequent formation of Casparian strips, a cell wall modification of the root endodermis that determines an apoplastic barrier between the intraorganismal apoplasm and the extraorganismal apoplasm and prevents lateral diffusion. This chain is Casparian strip membrane protein 1, found in Brachypodium distachyon (Purple false brome).